Reading from the N-terminus, the 386-residue chain is Patatin-B1 (386 aa).

A signal peptide spans 1 to 23 (MATTKSFLILFFMILATTSSTCA). Positions 32 to 229 (LSIDGGGIKG…TVGDPALLSL (198 aa)) constitute a PNPLA domain. The GXGXXG motif lies at 36–41 (GGGIKG). The GXSXG signature appears at 75–79 (GTSTG). Ser77 (nucleophile) is an active-site residue. Asn115 carries an N-linked (GlcNAc...) asparagine glycan. Asp215 functions as the Proton acceptor in the catalytic mechanism. Positions 215 to 217 (DGG) match the DGA/G motif.

This sequence belongs to the patatin family.

Its subcellular location is the vacuole. Probable lipolytic acyl hydrolase (LAH), an activity which is thought to be involved in the response of tubers to pathogens. This chain is Patatin-B1 (PATB1), found in Solanum tuberosum (Potato).